The following is a 95-amino-acid chain: Lipolysis-activating peptide 1-beta chain (95 aa).

Residues 1 to 22 form the signal peptide; the sequence is MISVQVIFIAFISIIAFSMVCG. Positions 23–91 constitute an LCN-type CS-alpha/beta domain; it reads GNVFPNRELG…FLNALEKQCP (69 aa). Intrachain disulfides connect cysteine 37–cysteine 60, cysteine 45–cysteine 70, and cysteine 49–cysteine 72.

Homodimer; disulfide-linked or monomer (edited version) or heterodimer of an alpha chain (AC P84810) and this beta chain (non-edited version). Expressed by the venom gland.

It localises to the secreted. Its function is as follows. The homodimer inhibits HMG-CoA reductase (HMGCR) (32% of inhibition produced by 0.6 uM), a glycoprotein involved in the control of cholesterol biosynthesis. The inhibitory effects of bumarsin are seen at much lower concentrations (0.6 uM) than that for statins such as atorvastatin (5 mM) and simvastatin (10 uM). In addition to inhibition of HMG-CoA reductase, this protein lowers cholesterol levels by inducing steroid hormone synthesis via StAR, and by increasing reverse cholesterol transport mediated by the induction of ABCA1 and APOA1. The heterodimer non-edited LVP1 induces lipolysis in rat adipocytes. Induction of lipolysis by LVP1 appears to be mediated through the beta-2 adrenergic receptor pathway (ADRB2). Intracerebroventricular injection is not toxic to mice. Functionally, the monomer edited version, similar to alpha-toxins, may modulate voltage-gated sodium channels (Nav) and may block voltage-gated potassium channels (Kv). This is Lipolysis-activating peptide 1-beta chain from Buthus occitanus tunetanus (Common European scorpion).